The sequence spans 469 residues: Glutamate--tRNA ligase (469 aa).

A 'HIGH' region motif is present at residues 9 to 19 (PSPTGMFHVGG). Zn(2+) is bound by residues Cys-100, Cys-102, Cys-122, and Asp-124. Residues 232–236 (KLSKR) carry the 'KMSKS' region motif. Lys-235 lines the ATP pocket.

The protein belongs to the class-I aminoacyl-tRNA synthetase family. Glutamate--tRNA ligase type 1 subfamily. Monomer. Zn(2+) serves as cofactor.

Its subcellular location is the cytoplasm. It carries out the reaction tRNA(Glu) + L-glutamate + ATP = L-glutamyl-tRNA(Glu) + AMP + diphosphate. In terms of biological role, catalyzes the attachment of glutamate to tRNA(Glu) in a two-step reaction: glutamate is first activated by ATP to form Glu-AMP and then transferred to the acceptor end of tRNA(Glu). This is Glutamate--tRNA ligase from Salinispora arenicola (strain CNS-205).